The sequence spans 256 residues: D-aminoacyl-tRNA deacylase (256 aa).

This sequence belongs to the DtdA deacylase family. As to quaternary structure, monomer. Zn(2+) is required as a cofactor.

The catalysed reaction is a D-aminoacyl-tRNA + H2O = a tRNA + a D-alpha-amino acid + H(+). The enzyme catalyses glycyl-tRNA(Ala) + H2O = tRNA(Ala) + glycine + H(+). D-aminoacyl-tRNA deacylase with broad substrate specificity. By recycling D-aminoacyl-tRNA to D-amino acids and free tRNA molecules, this enzyme counteracts the toxicity associated with the formation of D-aminoacyl-tRNA entities in vivo. The chain is D-aminoacyl-tRNA deacylase from Thermoplasma volcanium (strain ATCC 51530 / DSM 4299 / JCM 9571 / NBRC 15438 / GSS1).